The primary structure comprises 442 residues: C4-dicarboxylate transport protein (442 aa).

Transmembrane regions (helical) follow at residues 10-30, 40-60, 77-97, 144-164, 183-203, 221-241, 331-351, and 354-374; these read VQVL…PSLG, FIKL…VSGI, LLYF…IVNI, FTQG…FALL, VIFV…FGAM, LMIT…GLIA, LLGV…SGFI, and AATL…ILGI. The segment at 418 to 442 is disordered; the sequence is LPTIEPDVHSEERGEGRELDSLRPA. Over residues 423–442 the composition is skewed to basic and acidic residues; sequence PDVHSEERGEGRELDSLRPA.

Belongs to the dicarboxylate/amino acid:cation symporter (DAACS) (TC 2.A.23) family.

It is found in the cell membrane. In terms of biological role, responsible for the transport of dicarboxylates such as succinate, fumarate, and malate across the membrane. This is C4-dicarboxylate transport protein from Deinococcus deserti (strain DSM 17065 / CIP 109153 / LMG 22923 / VCD115).